The primary structure comprises 111 residues: Integration host factor subunit alpha (111 aa).

Belongs to the bacterial histone-like protein family. As to quaternary structure, heterodimer of an alpha and a beta chain.

In terms of biological role, this protein is one of the two subunits of integration host factor, a specific DNA-binding protein that functions in genetic recombination as well as in transcriptional and translational control. In Chelativorans sp. (strain BNC1), this protein is Integration host factor subunit alpha.